Here is a 363-residue protein sequence, read N- to C-terminus: Chorismate synthase (363 aa).

NADP(+) is bound at residue Arg-48. FMN is bound by residues 125–127 (RSS), 238–239 (NA), Gly-278, 293–297 (KPTAS), and Arg-319.

The protein belongs to the chorismate synthase family. As to quaternary structure, homotetramer. It depends on FMNH2 as a cofactor.

The catalysed reaction is 5-O-(1-carboxyvinyl)-3-phosphoshikimate = chorismate + phosphate. It functions in the pathway metabolic intermediate biosynthesis; chorismate biosynthesis; chorismate from D-erythrose 4-phosphate and phosphoenolpyruvate: step 7/7. Functionally, catalyzes the anti-1,4-elimination of the C-3 phosphate and the C-6 proR hydrogen from 5-enolpyruvylshikimate-3-phosphate (EPSP) to yield chorismate, which is the branch point compound that serves as the starting substrate for the three terminal pathways of aromatic amino acid biosynthesis. This reaction introduces a second double bond into the aromatic ring system. The sequence is that of Chorismate synthase from Acinetobacter baumannii (strain SDF).